The sequence spans 240 residues: Protein CDV3 homolog A (240 aa).

Positions 1–15 (MAEPQEKSLDDFFAK) are enriched in basic and acidic residues. Residues 1–204 (MAEPQEKSLD…TESRREKEME (204 aa)) form a disordered region. Ala2 bears the N-acetylalanine mark. Positions 27-52 (SGSAAGSRGSARPPDGAPSSSSSMSG) are enriched in low complexity. The span at 57–73 (VKKEKSGKSDNPDQLQE) shows a compositional bias: basic and acidic residues. Composition is skewed to polar residues over residues 127 to 141 (DKSS…QAQA) and 181 to 192 (SDTQFPSLQATA). Residues 193–204 (KHTESRREKEME) show a composition bias toward basic and acidic residues.

This sequence belongs to the CDV3 family.

Its subcellular location is the cytoplasm. The sequence is that of Protein CDV3 homolog A (cdv3-a) from Xenopus laevis (African clawed frog).